The primary structure comprises 62 residues: Photosystem II reaction center protein Z (62 aa).

The next 2 helical transmembrane spans lie at 8-28 (TLFA…VVFA) and 41-61 (FSGV…NSFV).

It belongs to the PsbZ family. In terms of assembly, PSII is composed of 1 copy each of membrane proteins PsbA, PsbB, PsbC, PsbD, PsbE, PsbF, PsbH, PsbI, PsbJ, PsbK, PsbL, PsbM, PsbT, PsbY, PsbZ, Psb30/Ycf12, at least 3 peripheral proteins of the oxygen-evolving complex and a large number of cofactors. It forms dimeric complexes.

It is found in the plastid. The protein localises to the chloroplast thylakoid membrane. Its function is as follows. May control the interaction of photosystem II (PSII) cores with the light-harvesting antenna, regulates electron flow through the 2 photosystem reaction centers. PSII is a light-driven water plastoquinone oxidoreductase, using light energy to abstract electrons from H(2)O, generating a proton gradient subsequently used for ATP formation. The polypeptide is Photosystem II reaction center protein Z (Oltmannsiellopsis viridis (Marine flagellate)).